The chain runs to 516 residues: Probable malate:quinone oxidoreductase (516 aa).

It belongs to the MQO family. Requires FAD as cofactor.

It catalyses the reaction (S)-malate + a quinone = a quinol + oxaloacetate. The protein operates within carbohydrate metabolism; tricarboxylic acid cycle; oxaloacetate from (S)-malate (quinone route): step 1/1. This is Probable malate:quinone oxidoreductase from Mycobacterium sp. (strain MCS).